A 193-amino-acid chain; its full sequence is Homeobox protein HD-12 (193 aa).

The homeobox; TALE-type DNA-binding region spans 123–185; it reads SVIRRINFPK…NARRRILPFM (63 aa).

It belongs to the TALE/KNOX homeobox family.

It localises to the nucleus. In Encephalitozoon cuniculi (strain GB-M1) (Microsporidian parasite), this protein is Homeobox protein HD-12 (HD-12).